Reading from the N-terminus, the 225-residue chain is Non-structural protein V (225 aa).

The span at 145–157 (SNEPVSSAGSAQD) shows a compositional bias: polar residues. The segment at 145–173 (SNEPVSSAGSAQDPNFKRGGANRERARGN) is disordered. 8 residues coordinate Zn(2+): histidine 174, cysteine 193, cysteine 197, cysteine 209, cysteine 211, cysteine 214, cysteine 218, and cysteine 221.

It belongs to the paramyxoviruses V protein family. As to quaternary structure, interacts with host IFIH1/MDA5 and DHX58/LGP2. Forms with host DDB1, CUL4A, STAT1 and STAT2 the HPIV2 virus V-dependent complex (VDC); this complex targets host STAT2 to proteasomal degradation.

Its subcellular location is the host nucleus. Plays an essential role in the inhibition of host immune response. Prevents the establishment of cellular antiviral state by blocking interferon-alpha/beta (IFN-alpha/beta) production and signaling pathway. Interacts with host IFIH1/MDA5 and DHX58/LGP2 to inhibit the transduction pathway involved in the activation of IFN-beta promoter, thus protecting the virus against cell antiviral state. Efficiently blocks type I IFN signaling following infection by targeting host STAT2 for proteasomal degradation. Also plays a role in viral growth by promoting host RhoA-induced F-actin formation. This Homo sapiens (Human) protein is Non-structural protein V (P/V).